The sequence spans 186 residues: Large ribosomal subunit protein uL22 (186 aa).

Positions 160-186 (AAENEPAKKKLSKKKLQRQKEKMMRNE) are disordered. A compositionally biased stretch (basic and acidic residues) spans 177 to 186 (RQKEKMMRNE).

Belongs to the universal ribosomal protein uL22 family.

This chain is Large ribosomal subunit protein uL22 (RpL17), found in Aedes aegypti (Yellowfever mosquito).